A 94-amino-acid polypeptide reads, in one-letter code: Endoribonuclease VapD 2 (94 aa).

This sequence belongs to the VapD ribonuclease family. In terms of assembly, homodimer.

In terms of biological role, cleaves ssRNA, mostly between U:A. In Riemerella anatipestifer (Moraxella anatipestifer), this protein is Endoribonuclease VapD 2.